A 522-amino-acid polypeptide reads, in one-letter code: Peptide chain release factor 3 (522 aa).

In terms of domain architecture, tr-type G spans 10–277 (ASRKTFAIIS…TFVDFAPSPS (268 aa)). GTP contacts are provided by residues 19-26 (SHPDAGKT), 87-91 (DTPGH), and 141-144 (NKMD).

This sequence belongs to the TRAFAC class translation factor GTPase superfamily. Classic translation factor GTPase family. PrfC subfamily.

The protein localises to the cytoplasm. In terms of biological role, increases the formation of ribosomal termination complexes and stimulates activities of RF-1 and RF-2. It binds guanine nucleotides and has strong preference for UGA stop codons. It may interact directly with the ribosome. The stimulation of RF-1 and RF-2 is significantly reduced by GTP and GDP, but not by GMP. This chain is Peptide chain release factor 3, found in Listeria monocytogenes serotype 4b (strain CLIP80459).